A 267-amino-acid chain; its full sequence is Large ribosomal subunit protein uL4 (267 aa).

It belongs to the universal ribosomal protein uL4 family. In terms of assembly, part of the 50S ribosomal subunit.

Functionally, one of the primary rRNA binding proteins, this protein initially binds near the 5'-end of the 23S rRNA. It is important during the early stages of 50S assembly. It makes multiple contacts with different domains of the 23S rRNA in the assembled 50S subunit and ribosome. Its function is as follows. Forms part of the polypeptide exit tunnel. The protein is Large ribosomal subunit protein uL4 of Saccharolobus islandicus (strain M.16.27) (Sulfolobus islandicus).